The sequence spans 282 residues: Hepatitis A virus cellular receptor 2 homolog (282 aa).

A signal peptide spans 1 to 21; it reads MFSWLPFSCALLLLQPLPARS. The region spanning 22 to 131 is the Ig-like V-type domain; that stretch reads LENAYTAEVG…EKLELKLSIT (110 aa). At 22 to 194 the chain is on the extracellular side; that stretch reads LENAYTAEVG…KDSGETIRTA (173 aa). Cystine bridges form between Cys38/Cys111, Cys52/Cys63, and Cys58/Cys110. Residue Gln62 participates in a 1,2-diacyl-sn-glycero-3-phospho-L-serine binding. Residues Asn74 and Asn100 are each glycosylated (N-linked (GlcNAc...) asparagine). A 1,2-diacyl-sn-glycero-3-phospho-L-serine is bound at residue Arg112. Ca(2+)-binding residues include Phe115 and Gly117. Met119 provides a ligand contact to a 1,2-diacyl-sn-glycero-3-phospho-L-serine. Asn120 lines the Ca(2+) pocket. The interval 138-163 is disordered; the sequence is PAGTAHGDSTTASPRTLTTEGSGSET. A compositionally biased stretch (polar residues) spans 144–163; sequence GDSTTASPRTLTTEGSGSET. O-linked (GalNAc...) threonine glycosylation occurs at Thr147. Asn173 is a glycosylation site (N-linked (GlcNAc...) asparagine). A helical transmembrane segment spans residues 195-215; that stretch reads VHIGVGVSAGLALALILGVLI. Over 216 to 282 the chain is Cytoplasmic; that stretch reads LKWYSSKKKK…YCYVSSQQPS (67 aa). Residues 253-271 are interaction with BAG6; it reads EENIYTIEENIYEMENSNE. Tyr257 carries the phosphotyrosine; by ITK modification.

The protein belongs to the immunoglobulin superfamily. TIM family. Interacts with HMGB1; impairs HMGB1 binding to B-DNA and likely HMGB1-mediated innate immune response. Interacts with BAG6. Interacts (phosphorylated) with PIK3R1 and PIK3R2. Interacts (not dependent on its phosphorylation status) with FYN. Interacts (in basal state T-cells) with VAV1; AKT1/2, LCP2, ZAP70, SYK, PIK3R1, FYN, SH3BP2 and SH2D2A. Interacts (in activated T-cells) with LCK and PLCG. Interacts with ILF3; this interaction promotes ILF3 ubiquitination and degradation.

It localises to the membrane. The protein localises to the cell junction. In terms of biological role, cell surface receptor implicated in modulating innate and adaptive immune responses. Generally accepted to have an inhibiting function. Reports on stimulating functions suggest that the activity may be influenced by the cellular context and/or the respective ligand. Regulates macrophage activation. Inhibits T-helper type 1 lymphocyte (Th1)-mediated auto- and alloimmune responses and promotes immunological tolerance. In CD8+ cells attenuates TCR-induced signaling, specifically by blocking NF-kappaB and NFAT promoter activities resulting in the loss of IL-2 secretion. The function may implicate its association with LCK proposed to impair phosphorylation of TCR subunits. In contrast, shown to activate TCR-induced signaling in T-cells probably implicating ZAP70, LCP2, LCK and FYN. Expressed on Treg cells can inhibit Th17 cell responses. Receptor for LGALS9. Binding to LGALS9 is believed to result in suppression of T-cell responses; the resulting apoptosis of antigen-specific cells may implicate HAVCR2 phosphorylation and disruption of its association with BAG6. Binding to LGALS9 is proposed to be involved in innate immune response to intracellular pathogens. Expressed on Th1 cells interacts with LGALS9 expressed on Mycobacterium tuberculosis-infected macrophages to stimulate antibactericidal activity including IL-1 beta secretion and to restrict intracellular bacterial growth. However, the function as receptor for LGALS9 has been challenged. Also reported to enhance CD8+ T cell responses to an acute infection such as by Listeria monocytogenes. Receptor for phosphatidylserine (PtSer); PtSer-binding is calcium-dependent. May recognize PtSer on apoptotic cells leading to their phagocytosis. Mediates the engulfment of apoptotic cells by dendritic cells. Expressed on T-cells, promotes conjugation but not engulfment of apoptotic cells. Expressed on dendritic cells (DCs) positively regulates innate immune response and in synergy with Toll-like receptors promotes secretion of TNF-alpha. In tumor-imfiltrating DCs suppresses nucleic acid-mediated innate immune repsonse by interaction with HMGB1 and interfering with nucleic acid-sensing and trafficking of nucleid acids to endosomes. Can enhance mast cell production of Th2 cytokines Il-4, IL-6 and IL-13. Expressed on natural killer (NK) cells acts as a coreceptor to enhance IFN-gamma production in response to LGALS9. In contrast, shown to suppress NK cell-mediated cytotoxicity. Negatively regulates NK cell function in LPS-induced endotoxic shock. This is Hepatitis A virus cellular receptor 2 homolog (Havcr2) from Rattus norvegicus (Rat).